Reading from the N-terminus, the 364-residue chain is Alanine racemase (364 aa).

Residue lysine 35 is the Proton acceptor; specific for D-alanine of the active site. N6-(pyridoxal phosphate)lysine is present on lysine 35. Arginine 131 contacts substrate. The active-site Proton acceptor; specific for L-alanine is the tyrosine 256. Residue methionine 304 coordinates substrate.

It belongs to the alanine racemase family. Pyridoxal 5'-phosphate is required as a cofactor.

The enzyme catalyses L-alanine = D-alanine. It functions in the pathway amino-acid biosynthesis; D-alanine biosynthesis; D-alanine from L-alanine: step 1/1. Its function is as follows. Catalyzes the interconversion of L-alanine and D-alanine. May also act on other amino acids. The sequence is that of Alanine racemase (alr) from Halorhodospira halophila (strain DSM 244 / SL1) (Ectothiorhodospira halophila (strain DSM 244 / SL1)).